A 148-amino-acid chain; its full sequence is Putative transmembrane protein ORF23 (148 aa).

Positions 1-18 (MVIILLGVSIVVPGLFLA) are cleaved as a signal peptide. At 19-118 (TETPQTNTFE…YVGWPSGAET (100 aa)) the chain is on the extracellular side. Residues 119–139 (IITNIADIIIMATAVMIIGAI) traverse the membrane as a helical segment. Residues 140 to 148 (YTGYKVSIK) lie on the Cytoplasmic side of the membrane.

The protein localises to the host membrane. The sequence is that of Putative transmembrane protein ORF23 from His1 virus (isolate Australia/Victoria) (His1V).